The following is a 1242-amino-acid chain: Insulin receptor substrate 1 (1242 aa).

A Phosphoserine modification is found at Ser-3. Positions 3–137 (SPPESDGFSD…GAGGGGGSCS (135 aa)) are mediates interaction with PHIP. Residues 12–115 (DVRKVGYLRK…WYQALLQLHN (104 aa)) form the PH domain. Ser-99 is modified (phosphoserine; by CK2). The IRS-type PTB domain maps to 160-264 (FKEVWQVILK…EAMRAMSDEF (105 aa)). The disordered stretch occupies residues 262–430 (DEFRPRSKSQ…SDGGFISSDE (169 aa)). Residues 269–281 (KSQSSSNCSNPIS) are compositionally biased toward low complexity. Ser-270 and Ser-307 each carry phosphoserine; by RPS6KB1. At Ser-312 the chain carries Phosphoserine; by IKKB, MAPK8 and RPS6KB1. 5 positions are modified to phosphoserine: Ser-315, Ser-323, Ser-330, Ser-345, and Ser-348. Residues 354–363 (THAHRHRGSA) are compositionally biased toward basic residues. Low complexity-rich tracts occupy residues 383–404 (SPSA…GSTS) and 412–424 (SSAS…SDGG). Ser-419 is modified (phosphoserine). Thr-446 and Thr-453 each carry phosphothreonine. Tyr-465 is subject to Phosphotyrosine; by INSR. A YXXM motif 1 motif is present at residues 465 to 468 (YICM). A Phosphoserine; by RPS6KB1 modification is found at Ser-527. The short motif at 551–554 (YTEM) is the YXXM motif 2 element. Positions 592–610 (LERRGGHHRPDSSTLHTDD) are enriched in basic and acidic residues. Positions 592 to 616 (LERRGGHHRPDSSTLHTDDGYMPMS) are disordered. At Tyr-612 the chain carries Phosphotyrosine; by INSR. Positions 612–615 (YMPM) match the YXXM motif 3 motif. Phosphoserine occurs at positions 616 and 629. Tyr-632 is subject to Phosphotyrosine; by INSR. Positions 632 to 635 (YMPM) match the YXXM motif 4 motif. Ser-636 carries the post-translational modification Phosphoserine; by RPS6KB1. Tyr-662 is subject to Phosphotyrosine. The YXXM motif 5 motif lies at 662–665 (YMMM). The segment at 668 to 693 (SGGCSPDIGGGPSSSSSSSNAVPSGT) is disordered. The short motif at 732–735 (YMNM) is the YXXM motif 6 element. Disordered regions lie at residues 771–900 (FKHT…VNIE) and 918–937 (SPSV…EETG). The segment covering 776-785 (RPGEPEEGAR) has biased composition (basic and acidic residues). Residue Ser-794 is modified to Phosphoserine; by AMPK and SIK2. Residues 801–815 (AATADDSSSSTSSDS) show a composition bias toward low complexity. Phosphoserine is present on Ser-892. A Phosphotyrosine; by INSR modification is found at Tyr-896. The segment at 896–898 (YVN) is GRB2-binding. Residues 918–928 (SPSVRCPSQLQ) are compositionally biased toward polar residues. A phosphotyrosine; by INSR mark is found at Tyr-941 and Tyr-989. Short sequence motifs (YXXM motif) lie at residues 941–944 (YMKM), 989–992 (YMTM), and 1012–1015 (YADM). The interval 1057-1146 (SSLLGGPQGP…DVKRHSSASF (90 aa)) is disordered. Polar residues predominate over residues 1073-1085 (TRVNLSPNRNQSA). At Ser-1100 the chain carries Phosphoserine. A Phosphoserine; by RPS6KB1 and PKC/PRKCQ modification is found at Ser-1101. Polar residues predominate over residues 1102–1114 (ETFSSTPSATRVG). Position 1179 is a phosphotyrosine; by INSR (Tyr-1179). Residues Lys-1186 and Lys-1189 each participate in a glycyl lysine isopeptide (Lys-Gly) (interchain with G-Cter in ubiquitin) cross-link. A disordered region spans residues 1190 to 1242 (QCPQECTPEPQPPPPPPPHQPLGSGESSSTRRSSEDLSAYASISFQKQPEDRQ). The span at 1198–1209 (EPQPPPPPPPHQ) shows a compositional bias: pro residues. Positions 1210-1220 (PLGSGESSSTR) are enriched in low complexity. Tyr-1229 is subject to Phosphotyrosine; by INSR.

In terms of assembly, interacts with UBTF and PIK3CA. Interacts (via phosphorylated YXXM motifs) with PIK3R1. Interacts with ROCK1 and FER. Interacts (via PH domain) with PHIP. Interacts with GRB2. Interacts with SOCS7. Interacts (via IRS-type PTB domain) with IGF1R and INSR (via the tyrosine-phosphorylated NPXY motif). Interacts with ALK. Interacts with EIF2AK2/PKR. Interacts with GKAP1. Interacts with DGKZ in the absence of insulin; insulin stimulation decreases this interaction. Found in a ternary complex with DGKZ and PIP5K1A in the absence of insulin stimulation. Interacts with SQSTM1; the interaction is disrupted by the presence of tensin TNS2. Interacts with NCK1 (via SH2 domain). Interacts with NCK2 (via SH3 domain). Interacts with SH2B1; this interaction enhances leptin-induced activation of the PI3-kinase pathway. Interacts with DVL2; this interaction promotes the Wnt/beta-catenin signaling pathway. Post-translationally, serine phosphorylation of IRS1 is a mechanism for insulin resistance. Ser-307, Ser-312, Ser-315, and Ser-323 phosphorylations inhibit insulin action through disruption of IRS1 interaction with the insulin receptor INSR. Phosphorylation of Tyr-896 is required for GRB2-binding. Phosphorylated by ALK. Phosphorylated at Ser-270, Ser-307, Ser-636 and Ser-1101 by RPS6KB1; phosphorylation induces accelerated degradation of IRS1. Phosphorylated on tyrosine residues in response to insulin. In skeletal muscles, dephosphorylated on Tyr-612 by TNS2 under anabolic conditions; dephosphorylation results in the proteasomal degradation of IRS1. Ubiquitinated by the Cul7-RING(FBXW8) complex in a mTOR-dependent manner, leading to its degradation: the Cul7-RING(FBXW8) complex recognizes and binds IRS1 previously phosphorylated by S6 kinase (RPS6KB1 or RPS6KB2). Ubiquitinated by TRAF4 through 'Lys-29' linkage; this ubiquitination regulates the interaction of IRS1 with IGFR and IRS1 tyrosine phosphorylation upon IGF1 stimulation. In terms of processing, S-nitrosylation at by BLVRB inhibits its activity.

Its subcellular location is the cytoplasm. It is found in the nucleus. Functionally, signaling adapter protein that participates in the signal transduction from two prominent receptor tyrosine kinases, insulin receptor/INSR and insulin-like growth factor I receptor/IGF1R. Plays therefore an important role in development, growth, glucose homeostasis as well as lipid metabolism. Upon phosphorylation by the insulin receptor, functions as a signaling scaffold that propagates insulin action through binding to SH2 domain-containing proteins including the p85 regulatory subunit of PI3K, NCK1, NCK2, GRB2 or SHP2. Recruitment of GRB2 leads to the activation of the guanine nucleotide exchange factor SOS1 which in turn triggers the Ras/Raf/MEK/MAPK signaling cascade. Activation of the PI3K/AKT pathway is responsible for most of insulin metabolic effects in the cell, and the Ras/Raf/MEK/MAPK is involved in the regulation of gene expression and in cooperation with the PI3K pathway regulates cell growth and differentiation. Acts a positive regulator of the Wnt/beta-catenin signaling pathway through suppression of DVL2 autophagy-mediated degradation leading to cell proliferation. The sequence is that of Insulin receptor substrate 1 (IRS1) from Homo sapiens (Human).